A 61-amino-acid chain; its full sequence is uncharacterized protein (61 aa).

Residues 39–61 (PRPFTPGLADPRRLGPRRVQAAQ) are disordered.

This is an uncharacterized protein from Pan troglodytes (Chimpanzee).